We begin with the raw amino-acid sequence, 53 residues long: MFRWGIIFLIIALIEAALGFGGLAGTAAWAAKVVFVVGIILFLISLFTGRKRL.

2 helical membrane passes run 4-24 (WGII…GGLA) and 27-47 (AAWA…ISLF).

The protein belongs to the UPF0391 family.

Its subcellular location is the cell membrane. The protein is UPF0391 membrane protein YPDSF_3201 of Yersinia pestis (strain Pestoides F).